A 262-amino-acid chain; its full sequence is Acyl-[acyl-carrier-protein]--UDP-N-acetylglucosamine O-acyltransferase (262 aa).

Belongs to the transferase hexapeptide repeat family. LpxA subfamily. In terms of assembly, homotrimer.

It localises to the cytoplasm. The enzyme catalyses a (3R)-hydroxyacyl-[ACP] + UDP-N-acetyl-alpha-D-glucosamine = a UDP-3-O-[(3R)-3-hydroxyacyl]-N-acetyl-alpha-D-glucosamine + holo-[ACP]. The protein operates within glycolipid biosynthesis; lipid IV(A) biosynthesis; lipid IV(A) from (3R)-3-hydroxytetradecanoyl-[acyl-carrier-protein] and UDP-N-acetyl-alpha-D-glucosamine: step 1/6. Functionally, involved in the biosynthesis of lipid A, a phosphorylated glycolipid that anchors the lipopolysaccharide to the outer membrane of the cell. The protein is Acyl-[acyl-carrier-protein]--UDP-N-acetylglucosamine O-acyltransferase of Shigella dysenteriae serotype 1 (strain Sd197).